The primary structure comprises 415 residues: Lipoyl synthase, mitochondrial (415 aa).

Residues M1 to Y33 constitute a mitochondrion transit peptide. [4Fe-4S] cluster is bound by residues C132, C137, C143, C163, C167, C170, and S378. The Radical SAM core domain maps to D148 to L367.

It belongs to the radical SAM superfamily. Lipoyl synthase family. It depends on [4Fe-4S] cluster as a cofactor.

The protein localises to the mitochondrion. It carries out the reaction [[Fe-S] cluster scaffold protein carrying a second [4Fe-4S](2+) cluster] + N(6)-octanoyl-L-lysyl-[protein] + 2 oxidized [2Fe-2S]-[ferredoxin] + 2 S-adenosyl-L-methionine + 4 H(+) = [[Fe-S] cluster scaffold protein] + N(6)-[(R)-dihydrolipoyl]-L-lysyl-[protein] + 4 Fe(3+) + 2 hydrogen sulfide + 2 5'-deoxyadenosine + 2 L-methionine + 2 reduced [2Fe-2S]-[ferredoxin]. It functions in the pathway protein modification; protein lipoylation via endogenous pathway; protein N(6)-(lipoyl)lysine from octanoyl-[acyl-carrier-protein]: step 2/2. In terms of biological role, catalyzes the radical-mediated insertion of two sulfur atoms into the C-6 and C-8 positions of the octanoyl moiety bound to the lipoyl domains of lipoate-dependent enzymes, thereby converting the octanoylated domains into lipoylated derivatives. This is Lipoyl synthase, mitochondrial from Aspergillus clavatus (strain ATCC 1007 / CBS 513.65 / DSM 816 / NCTC 3887 / NRRL 1 / QM 1276 / 107).